Here is a 409-residue protein sequence, read N- to C-terminus: Argininosuccinate synthase (409 aa).

ATP is bound by residues 8 to 16 and alanine 34; that span reads AYSGGLDTS. Tyrosine 85 provides a ligand contact to L-citrulline. ATP is bound at residue glycine 115. L-aspartate contacts are provided by threonine 117, asparagine 121, and aspartate 122. Position 121 (asparagine 121) interacts with L-citrulline. Residues arginine 125, serine 178, serine 187, glutamate 268, and tyrosine 280 each contribute to the L-citrulline site.

Belongs to the argininosuccinate synthase family. Type 1 subfamily. As to quaternary structure, homotetramer.

It is found in the cytoplasm. It catalyses the reaction L-citrulline + L-aspartate + ATP = 2-(N(omega)-L-arginino)succinate + AMP + diphosphate + H(+). It participates in amino-acid biosynthesis; L-arginine biosynthesis; L-arginine from L-ornithine and carbamoyl phosphate: step 2/3. This Thermotoga petrophila (strain ATCC BAA-488 / DSM 13995 / JCM 10881 / RKU-1) protein is Argininosuccinate synthase.